The sequence spans 250 residues: Probable transcriptional regulatory protein PERMA_0079 (250 aa).

The protein belongs to the TACO1 family.

The protein resides in the cytoplasm. In Persephonella marina (strain DSM 14350 / EX-H1), this protein is Probable transcriptional regulatory protein PERMA_0079.